The sequence spans 179 residues: Large ribosomal subunit protein uL5 (179 aa).

This sequence belongs to the universal ribosomal protein uL5 family. Part of the 50S ribosomal subunit; part of the 5S rRNA/L5/L18/L25 subcomplex. Contacts the 5S rRNA and the P site tRNA. Forms a bridge to the 30S subunit in the 70S ribosome.

This is one of the proteins that bind and probably mediate the attachment of the 5S RNA into the large ribosomal subunit, where it forms part of the central protuberance. In the 70S ribosome it contacts protein S13 of the 30S subunit (bridge B1b), connecting the 2 subunits; this bridge is implicated in subunit movement. Contacts the P site tRNA; the 5S rRNA and some of its associated proteins might help stabilize positioning of ribosome-bound tRNAs. The sequence is that of Large ribosomal subunit protein uL5 from Bordetella petrii (strain ATCC BAA-461 / DSM 12804 / CCUG 43448).